Consider the following 369-residue polypeptide: Chanoclavine-I aldehyde reductase fgaOx3 (369 aa).

Residues 23–25, Ala58, Gln100, and His169 contribute to the FMN site; that span reads PMT. Substrate is bound by residues His169 and Asn172. Tyr174 functions as the Proton donor in the catalytic mechanism. FMN is bound by residues Gly292, 316 to 317, and Arg317; that span reads GR. Tyr344 is a binding site for substrate.

This sequence belongs to the NADH:flavin oxidoreductase/NADH oxidase family. In terms of assembly, monomer. FMN is required as a cofactor.

The catalysed reaction is dihydrochanoclavine-I aldehyde + NADP(+) = chanoclavine-I aldehyde + NADPH + H(+). The protein operates within alkaloid biosynthesis; ergot alkaloid biosynthesis. Functionally, chanoclavine-I aldehyde reductase; part of the gene cluster that mediates the biosynthesis of isofumigaclavines, fungal ergot alkaloids. The tryptophan dimethylallyltransferase ifgA catalyzes the first step of ergot alkaloid biosynthesis by condensing dimethylallyl diphosphate (DMAP) and tryptophan to form 4-dimethylallyl-L-tryptophan. The second step is catalyzed by the methyltransferase ifgB that methylates 4-dimethylallyl-L-tryptophan in the presence of S-adenosyl-L-methionine, resulting in the formation of N-methyl-dimethylallyl-L-tryptophan. The catalase ifgD and the FAD-dependent oxidoreductase ifgC then transform N-methyl-dimethylallyl-L-tryptophan to chanoclavine-I which is further oxidized by ifgE in the presence of NAD(+), resulting in the formation of chanoclavine-I aldehyde. The chanoclavine-I aldehyde reductases ifgG and/or fgaOx3 reduce chanoclavine-I aldehyde to dihydrochanoclavine-I aldehyde that spontaneously dehydrates to form 6,8-dimethyl-6,7-didehydroergoline. The festuclavine dehydrogenases ifgF1 and/or ifgF2 then catalyze the reduction of 6,8-dimethyl-6,7-didehydroergoline to form festuclavine. Hydrolysis of festuclavine by a yet undetermined cytochrome P450 monooxygenase (called ifgH) then leads to the formation of isofumigaclavine B which is in turn acetylated by ifgI to isofumigaclavine A. Penicillium roqueforti has interestingly at least two sets of genes for the consumption of chanoclavine-I aldehyde on three different loci, the OYEs ifgG/fgaOx3 and the festuclavine synthase homologs ifgF1/ifgF2. The reason for the duplication of these genes is unclear, probably to ensure the conversion of chanoclavine-I aldehyde by differential gene expression under various environmental conditions. This Penicillium roqueforti (strain FM164) protein is Chanoclavine-I aldehyde reductase fgaOx3.